Consider the following 194-residue polypeptide: Leucyl/phenylalanyl-tRNA--protein transferase (194 aa).

This sequence belongs to the L/F-transferase family.

The protein localises to the cytoplasm. The enzyme catalyses N-terminal L-lysyl-[protein] + L-leucyl-tRNA(Leu) = N-terminal L-leucyl-L-lysyl-[protein] + tRNA(Leu) + H(+). It carries out the reaction N-terminal L-arginyl-[protein] + L-leucyl-tRNA(Leu) = N-terminal L-leucyl-L-arginyl-[protein] + tRNA(Leu) + H(+). The catalysed reaction is L-phenylalanyl-tRNA(Phe) + an N-terminal L-alpha-aminoacyl-[protein] = an N-terminal L-phenylalanyl-L-alpha-aminoacyl-[protein] + tRNA(Phe). Functions in the N-end rule pathway of protein degradation where it conjugates Leu, Phe and, less efficiently, Met from aminoacyl-tRNAs to the N-termini of proteins containing an N-terminal arginine or lysine. This Chlorobaculum parvum (strain DSM 263 / NCIMB 8327) (Chlorobium vibrioforme subsp. thiosulfatophilum) protein is Leucyl/phenylalanyl-tRNA--protein transferase.